Reading from the N-terminus, the 302-residue chain is Probable 2-(5''-triphosphoribosyl)-3'-dephosphocoenzyme-A synthase (302 aa).

It belongs to the CitG/MdcB family.

It carries out the reaction 3'-dephospho-CoA + ATP = 2'-(5''-triphospho-alpha-D-ribosyl)-3'-dephospho-CoA + adenine. The protein is Probable 2-(5''-triphosphoribosyl)-3'-dephosphocoenzyme-A synthase of Salmonella gallinarum (strain 287/91 / NCTC 13346).